Here is a 1120-residue protein sequence, read N- to C-terminus: Cluster 41 polyketide synthase (1120 aa).

The region spanning 7–430 (PHDVAVVGMG…GTVSHAIIEK (424 aa)) is the Ketosynthase family 3 (KS3) domain. Catalysis depends on for beta-ketoacyl synthase activity residues C178, H313, and H353. A malonyl-CoA:ACP transacylase (MAT) domain region spans residues 539–796 (VWVFSGHGAQ…TSAISAAAED (258 aa)). The active-site For acyl/malonyl transferase activity is S625. Residues 804–943 (IKKILSMESR…IAMQWTSWRE (140 aa)) are ketoreductase (KR) domain. In terms of domain architecture, Carrier spans 1042-1116 (DSLSRQVREC…HIVKWLMEKT (75 aa)). O-(pantetheine 4'-phosphoryl)serine is present on S1076.

Its function is as follows. Polyketide synthase; part of the gene cluster 41 that mediates the biosynthesis of an extracellular and diffusible metabolite that is able to stimulate colony sclerotial production. The chain is Cluster 41 polyketide synthase from Aspergillus flavus (strain ATCC 200026 / FGSC A1120 / IAM 13836 / NRRL 3357 / JCM 12722 / SRRC 167).